The chain runs to 165 residues: SPbeta prophage-derived uncharacterized protein YorR (165 aa).

The protein is SPbeta prophage-derived uncharacterized protein YorR (yorR) of Bacillus subtilis (strain 168).